We begin with the raw amino-acid sequence, 455 residues long: MFS-type transporter SLC18B1 (455 aa).

The residue at position 1 (Met1) is an N-acetylmethionine. Positions 1–26 (MDTAGPPAPAGTEGDGPGGSTGETSR) are disordered. The Cytoplasmic segment spans residues 1–32 (MDTAGPPAPAGTEGDGPGGSTGETSRRLSKEQ). At Ser20 the chain carries Phosphoserine. The helical transmembrane segment at 33–53 (IFVLVSAASMNLGCMMTYSIL) threads the bilayer. Topologically, residues 54 to 69 (GPFFPKEAEKKGASNT) are extracellular. The chain crosses the membrane as a helical span at residues 70–90 (TIGMIFGCYALFELLASLVFG). The Cytoplasmic segment spans residues 91–99 (KYLVHIGAK). Residues 100 to 120 (FMFIAGMFVSGGVTILFGVLD) traverse the membrane as a helical segment. At 121-126 (QLPEGP) the chain is on the extracellular side. A helical membrane pass occupies residues 127–147 (IFIAMCFLVRIVDAIGFGAAI). Topologically, residues 148-166 (TASSSILAKAFPNNVATVM) are cytoplasmic. Residues 167–187 (GSLEVFSGLGLVAGPPLGGLL) traverse the membrane as a helical segment. Over 188 to 194 (YQSFGYE) the chain is Extracellular. Residues 195–215 (VPFIFLGCIVLLMIPLNLCIL) traverse the membrane as a helical segment. Topologically, residues 216-232 (PSYESDAGKQSFWKLVT) are cytoplasmic. Residues 233 to 253 (LPKIGLIAFVIISLSSCFGFL) traverse the membrane as a helical segment. Over 254–271 (DPTLSLFVMKKFSLSTGY) the chain is Extracellular. Residues 272–292 (VGLVFLGLSLSYAISSPLFGL) form a helical membrane-spanning segment. Over 293 to 303 (LSDKMPNLRKW) the chain is Cytoplasmic. Residues 304–324 (FLVFGNLITAGCYMLLGPIPL) traverse the membrane as a helical segment. Over 325–330 (LHIKSQ) the chain is Extracellular. A helical transmembrane segment spans residues 331–351 (LWLLVLVLVINGVSAGMSIIP). Residues 352–376 (TFPEMLSCAYANGFEDGISTLGLVS) are Cytoplasmic-facing. The helical transmembrane segment at 377 to 397 (GLFGAMWSVGAFMGPILGGFL) threads the bilayer. At 398–406 (CEKIGFEWA) the chain is on the extracellular side. A helical transmembrane segment spans residues 407–427 (AAIQGLWTLLSGVAMALFYLW). The Cytoplasmic segment spans residues 428-455 (EDSTMRRSKAQNILGTEEEQAALLPNDT).

Expressed in brain structures, particularly in hippocampus, cortex, and cerebellum (at protein level). Expressed in astrocytes and hippocampal neurons (at protein level). Expressed in peritoneal mast cells.

It is found in the cytoplasmic vesicle. The protein localises to the secretory vesicle membrane. The protein resides in the secretory vesicle. It localises to the synaptic vesicle membrane. The enzyme catalyses spermine(in) + n H(+)(out) = spermine(out) + n H(+)(in). The catalysed reaction is spermidine(in) + n H(+)(out) = spermidine(out) + n H(+)(in). It catalyses the reaction serotonin(in) + n H(+)(out) = serotonin(out) + n H(+)(in). Proton-coupled polyamine antiporter involved in the translocation of polyamines from cytosol into secretory vesicles prior to their release via exocytosis. Uses the electrochemical proton gradient generated by a V-type proton-pumping ATPase to couple the efflux of protons with the uptake of a polyamine molecule. Facilitates vesicular storage of spermine and spermidine in astrocytes with an impact on glutamatergic neuronal transmission and memory formation. Upon antigen stimulation, regulates polyamine accumulation and release in mast cell secretory granules, which in turn potentiates mast cell degranulation and histamine secretion. This Rattus norvegicus (Rat) protein is MFS-type transporter SLC18B1.